The following is a 60-amino-acid chain: uncharacterized protein (60 aa).

This is an uncharacterized protein from Lepidoptera (butterflies and moths).